A 122-amino-acid polypeptide reads, in one-letter code: Large ribosomal subunit protein bL12 (122 aa).

Belongs to the bacterial ribosomal protein bL12 family. Homodimer. Part of the ribosomal stalk of the 50S ribosomal subunit. Forms a multimeric L10(L12)X complex, where L10 forms an elongated spine to which 2 to 4 L12 dimers bind in a sequential fashion. Binds GTP-bound translation factors.

In terms of biological role, forms part of the ribosomal stalk which helps the ribosome interact with GTP-bound translation factors. Is thus essential for accurate translation. The sequence is that of Large ribosomal subunit protein bL12 from Enterococcus faecalis (strain ATCC 700802 / V583).